A 343-amino-acid chain; its full sequence is Ornithine carbamoyltransferase, catabolic (343 aa).

62 to 65 is a binding site for carbamoyl phosphate; it reads STRT. His79 contacts Ni(2+). Residues Gln89, Arg113, and 140–143 contribute to the carbamoyl phosphate site; that span reads HPTQ. L-ornithine-binding positions include Asn172, Asp236, and 240–241; that span reads SM. Carbamoyl phosphate is bound by residues 278–279 and Arg323; that span reads CL.

It belongs to the aspartate/ornithine carbamoyltransferase superfamily. OTCase family. In terms of assembly, homohexamer; dimer of trimers. Ni(2+) serves as cofactor.

Its subcellular location is the cytoplasm. The catalysed reaction is carbamoyl phosphate + L-ornithine = L-citrulline + phosphate + H(+). It participates in amino-acid degradation; L-arginine degradation via ADI pathway; carbamoyl phosphate from L-arginine: step 2/2. Its function is as follows. Involved in the catabolism of arginine. Catalyzes the phosphorolysis of citrulline, the reverse reaction of the biosynthetic one, yielding ornithine and carbamoyl phosphate which serve to generate ATP from ADP. This is Ornithine carbamoyltransferase, catabolic from Lentilactobacillus hilgardii (Lactobacillus hilgardii).